We begin with the raw amino-acid sequence, 145 residues long: Probable 4-amino-4-deoxy-L-arabinose-phosphoundecaprenol flippase subunit ArnF (145 aa).

The Cytoplasmic segment spans residues 1–3; the sequence is MAH. A helical transmembrane segment spans residues 4-24; the sequence is LTLSIRGLLLALMSVLLISVA. Residues 25 to 61 lie on the Periplasmic side of the membrane; the sequence is QLSMKWGMGTLNQLWSDLVMLWQGEDYSSLFSQALAP. Residues 62-82 traverse the membrane as a helical segment; that stretch reads VMAVGAGLFCYALSMACWVMA. Residues 83-89 lie on the Cytoplasmic side of the membrane; it reads LKRLPLS. The chain crosses the membrane as a helical span at residues 90-110; the sequence is IAYPLLSLSYVLVYLGAVYLP. Residues 111–114 lie on the Periplasmic side of the membrane; that stretch reads WLNE. A helical transmembrane segment spans residues 115–135; that stretch reads PLSWVKGTGIFLILLGLIFVL. Residues 136-145 are Cytoplasmic-facing; the sequence is PKKNQTSDKS.

This sequence belongs to the ArnF family. Heterodimer of ArnE and ArnF.

It is found in the cell inner membrane. It functions in the pathway bacterial outer membrane biogenesis; lipopolysaccharide biosynthesis. Its function is as follows. Translocates 4-amino-4-deoxy-L-arabinose-phosphoundecaprenol (alpha-L-Ara4N-phosphoundecaprenol) from the cytoplasmic to the periplasmic side of the inner membrane. The sequence is that of Probable 4-amino-4-deoxy-L-arabinose-phosphoundecaprenol flippase subunit ArnF from Shewanella sediminis (strain HAW-EB3).